The primary structure comprises 469 residues: DENN domain-containing protein 2D (469 aa).

The interval 17–44 (LPRLRAGQSQNNPGEAVTEPERIQEHSP) is disordered. The uDENN domain occupies 55–204 (EYLLVVSLKK…AFPAPGKTVT (150 aa)). Residues 226–359 (HLEHVDFSVL…LQDDILDSLG (134 aa)) form the cDENN domain. Residues 361 to 445 (GINELKTSEQ…QEAEKSRNPP (85 aa)) enclose the dDENN domain.

It localises to the cytoplasm. Its function is as follows. Guanine nucleotide exchange factor (GEF) which may activate RAB9A and RAB9B. Promotes the exchange of GDP to GTP, converting inactive GDP-bound Rab proteins into their active GTP-bound form. In Mus musculus (Mouse), this protein is DENN domain-containing protein 2D (Dennd2d).